We begin with the raw amino-acid sequence, 467 residues long: ATP synthase subunit beta (467 aa).

Residue 153 to 160 coordinates ATP; sequence GGAGVGKT.

This sequence belongs to the ATPase alpha/beta chains family. F-type ATPases have 2 components, CF(1) - the catalytic core - and CF(0) - the membrane proton channel. CF(1) has five subunits: alpha(3), beta(3), gamma(1), delta(1), epsilon(1). CF(0) has three main subunits: a(1), b(2) and c(9-12). The alpha and beta chains form an alternating ring which encloses part of the gamma chain. CF(1) is attached to CF(0) by a central stalk formed by the gamma and epsilon chains, while a peripheral stalk is formed by the delta and b chains.

It localises to the cell membrane. It carries out the reaction ATP + H2O + 4 H(+)(in) = ADP + phosphate + 5 H(+)(out). Its function is as follows. Produces ATP from ADP in the presence of a proton gradient across the membrane. The catalytic sites are hosted primarily by the beta subunits. The polypeptide is ATP synthase subunit beta (Lactiplantibacillus plantarum (strain ATCC BAA-793 / NCIMB 8826 / WCFS1) (Lactobacillus plantarum)).